The primary structure comprises 213 residues: Redox-sensing transcriptional repressor Rex (213 aa).

The segment at residues 18–57 is a DNA-binding region (H-T-H motif); the sequence is LYYRFLKNLHASGKQRVSSAELSEAVKVDPATIRRDFSYF. NAD(+) is bound at residue 92 to 97; the sequence is GVGNLG.

Belongs to the transcriptional regulatory Rex family. Homodimer.

Its subcellular location is the cytoplasm. Modulates transcription in response to changes in cellular NADH/NAD(+) redox state. This chain is Redox-sensing transcriptional repressor Rex, found in Geobacillus kaustophilus (strain HTA426).